The primary structure comprises 262 residues: Carbonic anhydrase 13 (262 aa).

In terms of domain architecture, Alpha-carbonic anhydrase spans 4–261 (LSWGYREHNG…LKGRKVRASF (258 aa)). The active-site Proton donor/acceptor is the H65. Zn(2+)-binding residues include H95, H97, and H120. 200–201 (TV) is a substrate binding site.

The protein belongs to the alpha-carbonic anhydrase family. Requires Zn(2+) as cofactor. Expressed in thymus, small intestine, spleen, prostate, ovary, colon and testis.

The catalysed reaction is hydrogencarbonate + H(+) = CO2 + H2O. Inhibited by acetazolamide. In terms of biological role, reversible hydration of carbon dioxide. In Homo sapiens (Human), this protein is Carbonic anhydrase 13 (CA13).